Here is a 625-residue protein sequence, read N- to C-terminus: Arginine--tRNA ligase (625 aa).

The short motif at 117–127 (ANPIHPLHIGH) is the 'HIGH' region element.

It belongs to the class-I aminoacyl-tRNA synthetase family.

It localises to the cytoplasm. It catalyses the reaction tRNA(Arg) + L-arginine + ATP = L-arginyl-tRNA(Arg) + AMP + diphosphate. The polypeptide is Arginine--tRNA ligase (Saccharolobus solfataricus (strain ATCC 35092 / DSM 1617 / JCM 11322 / P2) (Sulfolobus solfataricus)).